The primary structure comprises 258 residues: MLIVVSPAKTLDYESPLVTHKFTQPELVDYSKQLIEVCRQLTPADVASLMKVSDKIADLNVGRFQEWSEEFTPDNARQAILAFKGDVYTGLEAETLNDDDFDYAQKHLRMLSGLYGLLKPLDLMQPYRLEMGTKLANPKGSNLYQFWGNVITEKLNEAIVAQGDNVLINLASNEYFKAVKPKALDAQVITPIFKDAKNGQYKVISFFAKKARGMMARYIIENRISSVADLTQFDSAGYYFVEEESTPTELVFKREEQH.

This sequence belongs to the UPF0246 family.

This Vibrio vulnificus (strain CMCP6) protein is UPF0246 protein VV1_0535.